A 442-amino-acid chain; its full sequence is Methylenetetrahydrofolate--tRNA-(uracil-5-)-methyltransferase TrmFO 1 (442 aa).

9–14 (GAGLAG) contacts FAD.

Belongs to the MnmG family. TrmFO subfamily. FAD serves as cofactor.

It is found in the cytoplasm. The enzyme catalyses uridine(54) in tRNA + (6R)-5,10-methylene-5,6,7,8-tetrahydrofolate + NADH + H(+) = 5-methyluridine(54) in tRNA + (6S)-5,6,7,8-tetrahydrofolate + NAD(+). The catalysed reaction is uridine(54) in tRNA + (6R)-5,10-methylene-5,6,7,8-tetrahydrofolate + NADPH + H(+) = 5-methyluridine(54) in tRNA + (6S)-5,6,7,8-tetrahydrofolate + NADP(+). Catalyzes the folate-dependent formation of 5-methyl-uridine at position 54 (M-5-U54) in all tRNAs. In Mesoplasma florum (strain ATCC 33453 / NBRC 100688 / NCTC 11704 / L1) (Acholeplasma florum), this protein is Methylenetetrahydrofolate--tRNA-(uracil-5-)-methyltransferase TrmFO 1.